Consider the following 532-residue polypeptide: Membrane protein insertase YidC (532 aa).

6 consecutive transmembrane segments (helical) span residues 6 to 26, 317 to 337, 342 to 362, 411 to 431, 451 to 473, and 496 to 516; these read IVLA…FAEY, AIDF…LTFF, GNWG…FWPL, GGCL…QALL, VWLA…GASM, and PIIF…YWLF.

It belongs to the OXA1/ALB3/YidC family. Type 1 subfamily. As to quaternary structure, interacts with the Sec translocase complex via SecD. Specifically interacts with transmembrane segments of nascent integral membrane proteins during membrane integration.

Its subcellular location is the cell membrane. Its function is as follows. Required for the insertion and/or proper folding and/or complex formation of integral membrane proteins into the membrane. Involved in integration of membrane proteins that insert both dependently and independently of the Sec translocase complex, as well as at least some lipoproteins. Aids folding of multispanning membrane proteins. This is Membrane protein insertase YidC from Lawsonia intracellularis (strain PHE/MN1-00).